The primary structure comprises 298 residues: Tyrosine recombinase XerD (298 aa).

Residues 3–88 (ALDHPLIDQF…GLRGFFRYLL (86 aa)) enclose the Core-binding (CB) domain. A Tyr recombinase domain is found at 109-292 (PLPKSLSEAD…AKARLQQLHA (184 aa)). Catalysis depends on residues R149, K173, H244, R247, and H270. Y279 serves as the catalytic O-(3'-phospho-DNA)-tyrosine intermediate.

It belongs to the 'phage' integrase family. XerD subfamily. Forms a cyclic heterotetrameric complex composed of two molecules of XerC and two molecules of XerD.

The protein resides in the cytoplasm. Site-specific tyrosine recombinase, which acts by catalyzing the cutting and rejoining of the recombining DNA molecules. The XerC-XerD complex is essential to convert dimers of the bacterial chromosome into monomers to permit their segregation at cell division. It also contributes to the segregational stability of plasmids. The sequence is that of Tyrosine recombinase XerD from Pseudomonas putida (strain ATCC 47054 / DSM 6125 / CFBP 8728 / NCIMB 11950 / KT2440).